A 403-amino-acid polypeptide reads, in one-letter code: Vacuole membrane protein 1 homolog (403 aa).

Residues 7-33 (IVLSNEKDIQLRIQQLEERKEKRKNVK) are a coiled coil. Helical transmembrane passes span 65–85 (FLLFFIALFASLTFIAVYVPG), 102–122 (IWWVGLGVLSSIGLGTGLHTF), 150–170 (ANSFIQPATAMIGGVSFWMIL), 175–195 (WAALFWGAGTAIGELPPYFVA), 240–260 (LIGNLGFFGILAFASIPNPLF), 263–283 (AGITCGHFLVPFWKFFGATFI), 294–314 (ACFVILAFNMETLTMVISFIE), and 348–368 (VGLAWDCVLFLMISYFLMSIV).

Belongs to the VMP1 family.

The protein resides in the membrane. It localises to the endoplasmic reticulum. It catalyses the reaction a 1,2-diacyl-sn-glycero-3-phospho-L-serine(in) = a 1,2-diacyl-sn-glycero-3-phospho-L-serine(out). The catalysed reaction is cholesterol(in) = cholesterol(out). The enzyme catalyses a 1,2-diacyl-sn-glycero-3-phosphocholine(in) = a 1,2-diacyl-sn-glycero-3-phosphocholine(out). It carries out the reaction a 1,2-diacyl-sn-glycero-3-phosphoethanolamine(in) = a 1,2-diacyl-sn-glycero-3-phosphoethanolamine(out). Phospholipid scramblase involved in lipid homeostasis and membrane dynamics processes. Required for autophagosome formation: participates in early stages of autophagosome biogenesis at the endoplasmic reticulum (ER) membrane by reequilibrating the leaflets of the ER as lipids are extracted. In addition to autophagy, involved in other processes in which phospholipid scramblase activity is required. This chain is Vacuole membrane protein 1 homolog, found in Dictyostelium discoideum (Social amoeba).